The chain runs to 441 residues: Polycomb protein EED (441 aa).

Positions 1–72 (MSEREVSTAP…PGRKSWGKGK (72 aa)) are disordered. The residue at position 2 (serine 2) is an N-acetylserine. A phosphoserine mark is found at serine 2 and serine 34. Over residues 45-61 (ESGTNTERPDTPTNTPN) the composition is skewed to polar residues. The residue at position 55 (threonine 55) is a Phosphothreonine. Position 66 is an N6,N6,N6-trimethyllysine; alternate (lysine 66). Lysine 66 bears the N6,N6-dimethyllysine; alternate mark. Lysine 66 carries the N6-methyllysine; alternate modification. The interval 81–441 (SFKCVNSLKE…ASIWRWDRLR (361 aa)) is interaction with EZH2. WD repeat units follow at residues 91–134 (DHNQ…EIRL), 142–185 (DADE…CIKH), 188–228 (GHGN…LVAI), and 234–275 (GHRD…NAIK). Required for interaction with the matrix protein MA of HIV-1 regions lie at residues 149–303 (TCAW…STRD) and 301–441 (TRDI…DRLR). N6,N6,N6-trimethyllysine; alternate is present on residues lysine 197, lysine 268, and lysine 284. 3 positions are modified to N6,N6-dimethyllysine; alternate: lysine 197, lysine 268, and lysine 284. 3 positions are modified to N6-methyllysine; alternate: lysine 197, lysine 268, and lysine 284. WD repeat units follow at residues 304–341 (IHRN…DDID), 359–399 (SQCD…PHKA), and 408–441 (KCGA…DRLR).

It belongs to the WD repeat ESC family. Component of the PRC2/EED-EZH2 complex, which includes EED, EZH2, SUZ12, RBBP4 and RBBP7 and possibly AEBP2. The minimum components required for methyltransferase activity of the PRC2/EED-EZH2 complex are EED, EZH2 and SUZ12. Component of the PRC2/EED-EZH1 complex, which includes EED, EZH1, SUZ12, RBBP4 and AEBP2. The PRC2 complex may also interact with DNMT1, DNMT3A, DNMT3B and PHF1 via the EZH2 subunit and with SIRT1 via the SUZ12 subunit. Interacts with HDAC, HDAC2, histone H1 and YY1. May interact with ITGA4, ITGAE and ITGB7. Interacts with CDYL. Interacts with BMAL1. Interacts with KMT2A/MLL1. In terms of assembly, (Microbial infection) May interact with the MA protein of HIV-1. In terms of processing, methylated. Binding to histone H1 'Lys-26' promotes mono-, di-, and trimethylation of internal lysines. In terms of tissue distribution, expressed in brain, colon, heart, kidney, liver, lung, muscle, ovary, peripheral blood leukocytes, pancreas, placenta, prostate, spleen, small intestine, testis, thymus and uterus. Appears to be overexpressed in breast and colon cancer.

It localises to the nucleus. Its subcellular location is the chromosome. In terms of biological role, polycomb group (PcG) protein. Component of the PRC2/EED-EZH2 complex, which methylates 'Lys-9' and 'Lys-27' of histone H3, leading to transcriptional repression of the affected target gene. Also recognizes 'Lys-26' trimethylated histone H1 with the effect of inhibiting PRC2 complex methyltransferase activity on nucleosomal histone H3 'Lys-27', whereas H3 'Lys-27' recognition has the opposite effect, enabling the propagation of this repressive mark. The PRC2/EED-EZH2 complex may also serve as a recruiting platform for DNA methyltransferases, thereby linking two epigenetic repression systems. Genes repressed by the PRC2/EED-EZH2 complex include HOXC8, HOXA9, MYT1 and CDKN2A. The protein is Polycomb protein EED of Homo sapiens (Human).